Here is a 345-residue protein sequence, read N- to C-terminus: Sorting nexin-15 (345 aa).

In terms of domain architecture, PX spans 1 to 130; that stretch reads MSRQAKDDFL…EFFRGGEVTR (130 aa). Arg-105 carries the omega-N-methylarginine modification. Positions 133 to 163 are disordered; that stretch reads EVSGDLHILPPPLIPTPPPDEPRVQPHETWL. The segment covering 141-151 has biased composition (pro residues); it reads LPPPLIPTPPP. 2 positions are modified to phosphoserine: Ser-208 and Ser-234. The disordered stretch occupies residues 226 to 274; it reads SKEEGAGPSPTHIGELAALEAGSGRPDQEPWEPGGQAEEDDEEGEPAPA. Residues 272–345 form the MIT domain; sequence APAYLSQATE…AEEILHLHLS (74 aa).

The protein belongs to the sorting nexin family.

Functionally, may be involved in several stages of intracellular trafficking. Overexpression of SNX15 disrupts the normal trafficking of proteins from the plasma membrane to recycling endosomes or the TGN. In Bos taurus (Bovine), this protein is Sorting nexin-15 (SNX15).